The chain runs to 98 residues: Cytochrome c2 (98 aa).

Q1 carries the pyrrolidone carboxylic acid modification. C10, C13, H14, and M76 together coordinate heme c.

This sequence belongs to the cytochrome c family. Post-translationally, binds 1 heme c group covalently per subunit.

It is found in the periplasm. Cytochrome c2 is found mainly in purple, non-sulfur, photosynthetic bacteria where it functions as the electron donor to the oxidized bacteriochlorophyll in the photophosphorylation pathway. However, it may also have a role in the respiratory chain and is found in some non-photosynthetic bacteria. The chain is Cytochrome c2 from Rhodoplanes tepidamans (Rhodoplanes cryptolactis).